The primary structure comprises 247 residues: Eukaryotic translation initiation factor 6 (247 aa).

Phosphoserine; by CK1 is present on residues S174 and S175.

Belongs to the eIF-6 family. Monomer. Associates with the 60S ribosomal subunit. Phosphorylation at Ser-174 and Ser-175 promotes nuclear export.

The protein localises to the cytoplasm. It is found in the nucleus. Its subcellular location is the nucleolus. In terms of biological role, binds to the 60S ribosomal subunit and prevents its association with the 40S ribosomal subunit to form the 80S initiation complex in the cytoplasm. Is also involved in ribosome biogenesis. Associates with pre-60S subunits in the nucleus and is involved in its nuclear export. This is Eukaryotic translation initiation factor 6 (tif6) from Talaromyces stipitatus (strain ATCC 10500 / CBS 375.48 / QM 6759 / NRRL 1006) (Penicillium stipitatum).